The sequence spans 79 residues: CDC42 small effector protein 1 (79 aa).

S-palmitoyl cysteine attachment occurs at residues Cys-10 and Cys-11. Positions 30-43 constitute a CRIB domain; that stretch reads IGEPMNFVHLTHIG. Residues 48-79 are disordered; it reads GAGDGLAMTGAVQEQMRSKGNRDRPWSNSRGL. The span at 63–72 shows a compositional bias: basic and acidic residues; sequence MRSKGNRDRP.

Belongs to the CDC42SE/SPEC family. In terms of assembly, interacts with CDC42 (in GTP-bound form). Interacts weakly with RAC1 and not at all with RHOA.

It localises to the cytoplasm. Its subcellular location is the cytoskeleton. It is found in the cell membrane. Functionally, probably involved in the organization of the actin cytoskeleton by acting downstream of CDC42, inducing actin filament assembly. Alters CDC42-induced cell shape changes. In activated T-cells, may play a role in CDC42-mediated F-actin accumulation at the immunological synapse. May play a role in early contractile events in phagocytosis in macrophages. The protein is CDC42 small effector protein 1 (CDC42SE1) of Bos taurus (Bovine).